The primary structure comprises 661 residues: Chermesin D/asnovolin J monooxidase nvfH (661 aa).

Residue Asn-12 is glycosylated (N-linked (GlcNAc...) asparagine). A helical membrane pass occupies residues Val-89–Phe-111. FAD-binding positions include Thr-128–Trp-131, Asp-140–Val-141, and Tyr-146. Residue Met-138–Asp-140 coordinates NADP(+). Residues Thr-286–Gln-292 and Arg-309–Thr-310 contribute to the NADP(+) site. N-linked (GlcNAc...) asparagine glycosylation is found at Asn-382 and Asn-538.

It belongs to the FAD-binding monooxygenase family. Requires FAD as cofactor.

The protein localises to the membrane. The catalysed reaction is chermesin D + AH2 + O2 = asnovolin I + A + H2O. It catalyses the reaction asnovolin J + AH2 + O2 = asnovolin A + A + H2O. Its pathway is secondary metabolite biosynthesis; terpenoid biosynthesis. In terms of biological role, chermesin D/asnovolin J monooxidase; part of the gene cluster that mediates the biosynthesis of novofumigatonin, a heavily oxygenated meroterpenoid containing a unique orthoester moiety. The first step of the pathway is the synthesis of 3,5-dimethylorsellinic acid (DMOA) by the polyketide synthase nvfA via condensation of one acetyl-CoA starter unit with 3 malonyl-CoA units and 2 methylations. DMOA is then converted to farnesyl-DMOA by the farnesyltransferase nvfB. Epoxydation by FAD-dependent monooxygenase nvfK, followed by a protonation-initiated cyclization catalyzed by the terpene cyclase nvfL leads to the production of asnavolin H. The short chain dehydrogenase nvfC then as a 3-OH dehydrogenase of asnovolin H to yield chemesin D. There are two branches to synthesize asnovolin A from chemesin D. In one branch, chemesin D undergoes Baeyer-Villiger oxidation by nvfH, methylation by nvfJ, and enoyl reduction by the nvfM D enoylreductase that reduces the double bond between C-5'and C-6', to form respectively asnovolin I, asnovolin K, and asnovolin A. In the other branch, the methylation precedes the Baeyer-Villiger oxidation and the enoyl reduction to yield asnovolin A via the asnovolin J intermediate. Asnovolin A is further converted to fumigatonoid A by the Fe(II)/2-oxoglutarate-dependent dioxygenase nvfI that catalyzes an endoperoxidation reaction. The alpha/beta hydrolase nvfD then acts as an epimerase that converts fumigatonoid A to its C-5' epimer, which then undergoes spontaneous or nvfD-catalyzed lactonization. The following step utilizes the ketoreductase nvfG to produce fumigatonoid B. The dioxygenase nvfE further converts fumigatonoid B into fumigatonoid C. Finally the Fe(II)/2-oxoglutarate-dependent dioxygenase nvfF catalyzes two rounds of oxidation to transform fumigatonoid C into the end product, novofumigatonin A. This Aspergillus novofumigatus (strain IBT 16806) protein is Chermesin D/asnovolin J monooxidase nvfH.